A 35-amino-acid polypeptide reads, in one-letter code: uncharacterized protein (35 aa).

The helical transmembrane segment at 10–30 (LMITASFFAIFIIIVVSVLLL) threads the bilayer.

It localises to the membrane. This is an uncharacterized protein from Salmonella typhimurium (strain LT2 / SGSC1412 / ATCC 700720).